The primary structure comprises 513 residues: 2-isopropylmalate synthase (513 aa).

Residues 5–267 form the Pyruvate carboxyltransferase domain; it reads LVIFDTTLRD…ETRIDTTQIV (263 aa). Aspartate 14, histidine 202, histidine 204, and asparagine 238 together coordinate Mn(2+). The segment at 393–513 is regulatory domain; that stretch reads KLVYSRVCSE…LDKVKAQGGV (121 aa).

This sequence belongs to the alpha-IPM synthase/homocitrate synthase family. LeuA type 1 subfamily. As to quaternary structure, homodimer. It depends on Mn(2+) as a cofactor.

It is found in the cytoplasm. It carries out the reaction 3-methyl-2-oxobutanoate + acetyl-CoA + H2O = (2S)-2-isopropylmalate + CoA + H(+). Its pathway is amino-acid biosynthesis; L-leucine biosynthesis; L-leucine from 3-methyl-2-oxobutanoate: step 1/4. Catalyzes the condensation of the acetyl group of acetyl-CoA with 3-methyl-2-oxobutanoate (2-ketoisovalerate) to form 3-carboxy-3-hydroxy-4-methylpentanoate (2-isopropylmalate). The sequence is that of 2-isopropylmalate synthase from Dechloromonas aromatica (strain RCB).